A 917-amino-acid chain; its full sequence is Glutamate receptor (917 aa).

The signal sequence occupies residues 1 to 19 (MDTCVFPLVVLWISMRITS). Over 20–556 (TLDEVPIGGI…HFFSFMEPLS (537 aa)) the chain is Extracellular. N-linked (GlcNAc...) asparagine glycans are attached at residues N62, N95, N121, N125, N229, N251, N261, N272, N418, N419, N424, and N491. The helical transmembrane segment at 557 to 577 (SEIWMCIVFAYIGVSVVLFLV) threads the bilayer. At 578–631 (SRFSPNEWHLSEAHHSYIANDFSISNSLWFSLGAFMQQGCDISPRSMSGRIVGS) the chain is on the cytoplasmic side. The chain crosses the membrane as a helical span at residues 632 to 652 (VWWFFTLIIISSYTANLAAFL). At 653-818 (TVERMLTPID…GAQSALTLAN (166 aa)) the chain is on the extracellular side. N-linked (GlcNAc...) asparagine glycosylation is present at N775. A helical membrane pass occupies residues 819–839 (VAGIFYILIGGLVVAVLSAAF). Topologically, residues 840-917 (EFLYKSRMDS…FEDSNTHTEV (78 aa)) are cytoplasmic. Residues 871 to 896 (HIDSEQKTTGNGTRRRSHNSVTYTYT) form a disordered region.

This sequence belongs to the glutamate-gated ion channel (TC 1.A.10.1) family.

It localises to the cell membrane. It is found in the postsynaptic cell membrane. In terms of biological role, receptor for glutamate. L-glutamate acts as an excitatory neurotransmitter at many synapses in the central nervous system. The postsynaptic actions of Glu are mediated by a variety of receptors. The polypeptide is Glutamate receptor (Lymnaea stagnalis (Great pond snail)).